Consider the following 498-residue polypeptide: ATP synthase subunit beta, chloroplastic (498 aa).

Residue 172–179 (GGAGVGKT) participates in ATP binding.

The protein belongs to the ATPase alpha/beta chains family. F-type ATPases have 2 components, CF(1) - the catalytic core - and CF(0) - the membrane proton channel. CF(1) has five subunits: alpha(3), beta(3), gamma(1), delta(1), epsilon(1). CF(0) has four main subunits: a(1), b(1), b'(1) and c(9-12).

Its subcellular location is the plastid. The protein resides in the chloroplast thylakoid membrane. The catalysed reaction is ATP + H2O + 4 H(+)(in) = ADP + phosphate + 5 H(+)(out). Produces ATP from ADP in the presence of a proton gradient across the membrane. The catalytic sites are hosted primarily by the beta subunits. This is ATP synthase subunit beta, chloroplastic from Galbulimima belgraveana (Northern pigeonberry ash).